The chain runs to 529 residues: Lysophosphatidylcholine acyltransferase 2 (529 aa).

Residues 1–50 are Cytoplasmic-facing; it reads MPPPHRVFALPRQQSLLLPAVINPFVHDLSLSTADITKCFLLGIILVPLR. A helical; Signal-anchor for type II membrane protein transmembrane segment spans residues 51–71; that stretch reads AIFLLLVLLVMWPVSVIITFG. Topologically, residues 72-529 are lumenal; that stretch reads QSLKGVVEPM…EDSASDKKDD (458 aa). Residues 128 to 133 carry the HXXXXD motif motif; sequence HSSFFD. An EGTC motif motif is present at residues 202–205; the sequence is EGTC. The N-linked (GlcNAc...) asparagine glycan is linked to Asn-207. EF-hand domains lie at 373-408, 410-445, and 449-480; these read PISP…LCRP, NNEE…ALGV, and DVHS…HPEY. Ca(2+)-binding residues include Asp-386, Asn-388, Asp-390, Thr-392, Glu-397, Asp-423, Asp-425, Asp-427, Cys-429, Glu-434, Asp-458, Asp-460, Ser-462, His-464, and Glu-469.

Belongs to the 1-acyl-sn-glycerol-3-phosphate acyltransferase family.

Its subcellular location is the endoplasmic reticulum membrane. It localises to the golgi apparatus membrane. The protein resides in the cell membrane. It is found in the lipid droplet. The catalysed reaction is a 1-acyl-sn-glycero-3-phosphocholine + an acyl-CoA = a 1,2-diacyl-sn-glycero-3-phosphocholine + CoA. It carries out the reaction a 1-O-alkyl-sn-glycero-3-phosphocholine + acetyl-CoA = a 1-O-alkyl-2-acetyl-sn-glycero-3-phosphocholine + CoA. It catalyses the reaction a 1-acyl-sn-glycero-3-phosphate + an acyl-CoA = a 1,2-diacyl-sn-glycero-3-phosphate + CoA. The enzyme catalyses a 1-O-(1Z-alkenyl)-sn-glycero-3-phosphocholine + an acyl-CoA = a 1-O-(1Z-alkenyl)-2-acyl-sn-glycero-3-phosphocholine + CoA. The catalysed reaction is 1-hexadecanoyl-sn-glycero-3-phosphate + (9Z)-octadecenoyl-CoA = 1-hexadecanoyl-2-(9Z-octadecenoyl)-sn-glycero-3-phosphate + CoA. It carries out the reaction 1-(9Z-octadecenoyl)-sn-glycero-3-phosphate + (9Z)-octadecenoyl-CoA = 1,2-di-(9Z-octadecenoyl)-sn-glycero-3-phosphate + CoA. It catalyses the reaction 1-(9Z-octadecenoyl)-sn-glycero-3-phosphate + hexadecanoyl-CoA = 1-(9Z)-octadecenoyl-2-hexadecanoyl-sn-glycero-3-phosphate + CoA. The enzyme catalyses 1-heptadecanoyl-sn-glycero-3-phosphate + (9Z)-octadecenoyl-CoA = 1-heptadecanoyl-2-(9Z)-octadecenoyl-sn-glycero-3-phosphate + CoA. The catalysed reaction is 1-octadecanoyl-sn-glycero-3-phosphate + (9Z)-octadecenoyl-CoA = 1-octadecanoyl-2-(9Z-octadecenoyl)-sn-glycero-3-phosphate + CoA. It carries out the reaction heptadecanoyl-CoA + 1-(9Z-octadecenoyl)-sn-glycero-3-phosphate = 1-(9Z)-octadecenoyl-2-heptadecanoyl-sn-glycero-3-phosphate + CoA. It catalyses the reaction 1-(9Z-octadecenoyl)-sn-glycero-3-phosphate + (9Z,12Z)-octadecadienoyl-CoA = 1-(9Z)-octadecenoyl-2-(9Z,12Z)-octadecadienoyl-sn-glycero-3-phosphate + CoA. The enzyme catalyses 1-(9Z-octadecenoyl)-sn-glycero-3-phosphate + tetradecanoyl-CoA = 1-(9Z)-octadecenoyl-2-tetradecanoyl-sn-glycero-3-phosphate + CoA. The catalysed reaction is pentadecanoyl-CoA + 1-(9Z-octadecenoyl)-sn-glycero-3-phosphate = 1-(9Z)-octadecenoyl-2-pentadecanoyl-sn-glycero-3-phosphate + CoA. It carries out the reaction nonadecanoyl-CoA + 1-(9Z-octadecenoyl)-sn-glycero-3-phosphate = 1-(9Z)-octadecenoyl-2-nonadecanoyl-sn-glycero-3-phosphate + CoA. It catalyses the reaction 1-hexadecanoyl-sn-glycero-3-phosphocholine + (9Z)-octadecenoyl-CoA = 1-hexadecanoyl-2-(9Z-octadecenoyl)-sn-glycero-3-phosphocholine + CoA. The enzyme catalyses 1-O-hexadecyl-sn-glycero-3-phosphocholine + acetyl-CoA = 1-O-hexadecyl-2-acetyl-sn-glycero-3-phosphocholine + CoA. The catalysed reaction is 1-O-octadecyl-sn-glycero-3-phosphocholine + acetyl-CoA = 1-O-octadecyl-2-acetyl-sn-glycero-3-phosphocholine + CoA. It carries out the reaction 1-hexadecanoyl-sn-glycero-3-phosphocholine + acetyl-CoA = 1-hexadecanoyl-2-acetyl-sn-glycero-3-phosphocholine + CoA. It catalyses the reaction 1-octadecanoyl-sn-glycero-3-phosphocholine + acetyl-CoA = 1-octadecanoyl-2-acetyl-sn-glycero-3-phosphocholine + CoA. The enzyme catalyses a 1-O-(1Z-alkenyl)-sn-glycero-3-phosphocholine + acetyl-CoA = 1-O-(1Z)-alkenyl-2-acetyl-sn-glycero-3-phosphocholine + CoA. The catalysed reaction is 1-O-octadecyl-sn-glycero-3-phosphocholine + (5Z,8Z,11Z,14Z)-eicosatetraenoyl-CoA = 1-O-octadecyl-2-(5Z,8Z,11Z,14Z)-eicosatetraenoyl-sn-glycero-3-phosphocholine + CoA. Its pathway is lipid metabolism; phospholipid metabolism. Exhibits both acyltransferase and acetyltransferase activities. Activity is calcium-dependent. Catalyzes the conversion of lysophosphatidylcholine (1-acyl-sn-glycero-3-phosphocholine or LPC) into phosphatidylcholine (1,2-diacyl-sn-glycero-3-phosphocholine or PC). Catalyzes the conversion 1-acyl-sn-glycerol-3-phosphate (lysophosphatidic acid or LPA) into 1,2-diacyl-sn-glycerol-3-phosphate (phosphatidic acid or PA) by incorporating an acyl moiety at the sn-2 position of the glycerol backbone. Involved in platelet-activating factor (PAF) biosynthesis by catalyzing the conversion of the PAF precursor, 1-O-alkyl-sn-glycero-3-phosphocholine (lyso-PAF) into 1-O-alkyl-2-acetyl-sn-glycero-3-phosphocholine (PAF). This Danio rerio (Zebrafish) protein is Lysophosphatidylcholine acyltransferase 2 (lpcat2).